The primary structure comprises 366 residues: tRNA/tmRNA (uracil-C(5))-methyltransferase (366 aa).

S-adenosyl-L-methionine is bound by residues Q190, Y218, N223, E239, and D299. The active-site Nucleophile is C324. Residue E358 is the Proton acceptor of the active site.

It belongs to the class I-like SAM-binding methyltransferase superfamily. RNA M5U methyltransferase family. TrmA subfamily.

It carries out the reaction uridine(54) in tRNA + S-adenosyl-L-methionine = 5-methyluridine(54) in tRNA + S-adenosyl-L-homocysteine + H(+). The catalysed reaction is uridine(341) in tmRNA + S-adenosyl-L-methionine = 5-methyluridine(341) in tmRNA + S-adenosyl-L-homocysteine + H(+). Functionally, dual-specificity methyltransferase that catalyzes the formation of 5-methyluridine at position 54 (m5U54) in all tRNAs, and that of position 341 (m5U341) in tmRNA (transfer-mRNA). The protein is tRNA/tmRNA (uracil-C(5))-methyltransferase of Escherichia coli (strain ATCC 8739 / DSM 1576 / NBRC 3972 / NCIMB 8545 / WDCM 00012 / Crooks).